Consider the following 334-residue polypeptide: Protein-methionine-sulfoxide reductase catalytic subunit MsrP (334 aa).

Positions 1 to 44 form a signal peptide, tat-type signal; it reads MKKNQFLKESDVTAESVFFMKRRQVLKALGISAAALSLPHAAHA. Mo-molybdopterin contacts are provided by residues asparagine 88, 91–92, cysteine 146, threonine 181, asparagine 233, arginine 238, and 249–251; these read YE and GIK.

This sequence belongs to the MsrP family. As to quaternary structure, heterodimer of a catalytic subunit (MsrP) and a heme-binding subunit (MsrQ). The cofactor is Mo-molybdopterin. Post-translationally, predicted to be exported by the Tat system. The position of the signal peptide cleavage has not been experimentally proven.

It is found in the periplasm. It catalyses the reaction L-methionyl-[protein] + a quinone + H2O = L-methionyl-(S)-S-oxide-[protein] + a quinol. It carries out the reaction L-methionyl-[protein] + a quinone + H2O = L-methionyl-(R)-S-oxide-[protein] + a quinol. Part of the MsrPQ system that repairs oxidized periplasmic proteins containing methionine sulfoxide residues (Met-O), using respiratory chain electrons. Thus protects these proteins from oxidative-stress damage caused by reactive species of oxygen and chlorine generated by the host defense mechanisms. MsrPQ is essential for the maintenance of envelope integrity under bleach stress, rescuing a wide series of structurally unrelated periplasmic proteins from methionine oxidation, including the primary periplasmic chaperone SurA and the lipoprotein Pal. The catalytic subunit MsrP is non-stereospecific, being able to reduce both (R-) and (S-) diastereoisomers of methionine sulfoxide. This Escherichia coli O157:H7 protein is Protein-methionine-sulfoxide reductase catalytic subunit MsrP.